Here is a 127-residue protein sequence, read N- to C-terminus: UPF0102 protein SYNAS_23220 (127 aa).

The protein belongs to the UPF0102 family.

The chain is UPF0102 protein SYNAS_23220 from Syntrophus aciditrophicus (strain SB).